The chain runs to 195 residues: Imidazoleglycerol-phosphate dehydratase (195 aa).

This sequence belongs to the imidazoleglycerol-phosphate dehydratase family.

The protein localises to the cytoplasm. The enzyme catalyses D-erythro-1-(imidazol-4-yl)glycerol 3-phosphate = 3-(imidazol-4-yl)-2-oxopropyl phosphate + H2O. It functions in the pathway amino-acid biosynthesis; L-histidine biosynthesis; L-histidine from 5-phospho-alpha-D-ribose 1-diphosphate: step 6/9. The chain is Imidazoleglycerol-phosphate dehydratase from Campylobacter curvus (strain 525.92).